The primary structure comprises 967 residues: Regulator of G-protein signaling 3 (967 aa).

The PDZ domain maps to 18-95 (QITIRRGKDG…EIILLVWRVV (78 aa)). The disordered stretch occupies residues 115-135 (THDLLSPPNKREKNCTHGAPT). Arg167 carries the post-translational modification Omega-N-methylarginine. The disordered stretch occupies residues 389 to 705 (QLAATPTERK…EGGLSLRVQN (317 aa)). Polar residues-rich tracts occupy residues 476–486 (LPSSKNPSPSQ), 512–549 (SPSS…TEVP), and 577–597 (SSAS…QGSL). A compositionally biased stretch (acidic residues) spans 650-676 (GEDEDAEEGEEGEEGEEDEEDDTNDDN). A compositionally biased stretch (basic and acidic residues) spans 677–687 (YGDRNEAKRSS). Ser713, Ser716, Ser748, and Ser777 each carry phosphoserine. The tract at residues 807-830 (FRRRNESPGAQPAGKADKTTKSFK) is disordered. The span at 821–830 (KADKTTKSFK) shows a compositional bias: basic and acidic residues. One can recognise an RGS domain in the interval 842 to 967 (SLEKLLLHKY…INQKKMSPPL (126 aa)).

As to quaternary structure, binds EFNB1 and EFNB2. Binds the GNB1-GNG2 heterodimer. Binds ESR1. Post-translationally, phosphorylated by cyclic GMP-dependent protein kinase. In terms of processing, ISGylated. Detected in kidney, uterus, ovary, heart, brain, spleen, lung and testis.

Its subcellular location is the cytoplasm. It localises to the membrane. The protein localises to the nucleus. Functionally, down-regulates signaling from heterotrimeric G-proteins by increasing the GTPase activity of the alpha subunits, thereby driving them into their inactive GDP-bound form. Down-regulates G-protein-mediated release of inositol phosphates and activation of MAP kinases. This is Regulator of G-protein signaling 3 (Rgs3) from Rattus norvegicus (Rat).